A 139-amino-acid polypeptide reads, in one-letter code: Gene 22 protein (139 aa).

The polypeptide is Gene 22 protein (22) (Mycobacterium phage D29 (Mycobacteriophage D29)).